Consider the following 365-residue polypeptide: Chorismate synthase (365 aa).

Residue R48 participates in NADP(+) binding. Residues 125-127, 238-239, G278, 293-297, and R319 each bind FMN; these read RSS, NA, and KPTSS.

Belongs to the chorismate synthase family. In terms of assembly, homotetramer. Requires FMNH2 as cofactor.

The catalysed reaction is 5-O-(1-carboxyvinyl)-3-phosphoshikimate = chorismate + phosphate. The protein operates within metabolic intermediate biosynthesis; chorismate biosynthesis; chorismate from D-erythrose 4-phosphate and phosphoenolpyruvate: step 7/7. Its function is as follows. Catalyzes the anti-1,4-elimination of the C-3 phosphate and the C-6 proR hydrogen from 5-enolpyruvylshikimate-3-phosphate (EPSP) to yield chorismate, which is the branch point compound that serves as the starting substrate for the three terminal pathways of aromatic amino acid biosynthesis. This reaction introduces a second double bond into the aromatic ring system. The polypeptide is Chorismate synthase (Ruthia magnifica subsp. Calyptogena magnifica).